The sequence spans 477 residues: RNA pseudouridine synthase 4, mitochondrial (477 aa).

Residues 1-43 (MAKWRLATATLRRQLQSSSPTISTFKNPTKALSAAAHQSTRSY) constitute a mitochondrion transit peptide. Residues 34–55 (AAAHQSTRSYSTTQTDDSRGKW) form a disordered region. A compositionally biased stretch (polar residues) spans 36-48 (AHQSTRSYSTTQT). The region spanning 90 to 175 (TTALRWILRC…AKKESFQCSD (86 aa)) is the S4 RNA-binding domain. Residue aspartate 236 is part of the active site.

This sequence belongs to the pseudouridine synthase RluA family.

Its subcellular location is the mitochondrion. The catalysed reaction is a uridine in RNA = a pseudouridine in RNA. This chain is RNA pseudouridine synthase 4, mitochondrial, found in Arabidopsis thaliana (Mouse-ear cress).